The following is a 110-amino-acid chain: UPF0367 protein sync_2587 (110 aa).

The protein belongs to the UPF0367 family.

This is UPF0367 protein sync_2587 from Synechococcus sp. (strain CC9311).